Consider the following 270-residue polypeptide: Putative pyruvate, phosphate dikinase regulatory protein (270 aa).

153 to 160 (GVSRTSKT) provides a ligand contact to ADP.

The protein belongs to the pyruvate, phosphate/water dikinase regulatory protein family. PDRP subfamily.

The catalysed reaction is N(tele)-phospho-L-histidyl/L-threonyl-[pyruvate, phosphate dikinase] + ADP = N(tele)-phospho-L-histidyl/O-phospho-L-threonyl-[pyruvate, phosphate dikinase] + AMP + H(+). The enzyme catalyses N(tele)-phospho-L-histidyl/O-phospho-L-threonyl-[pyruvate, phosphate dikinase] + phosphate + H(+) = N(tele)-phospho-L-histidyl/L-threonyl-[pyruvate, phosphate dikinase] + diphosphate. Its function is as follows. Bifunctional serine/threonine kinase and phosphorylase involved in the regulation of the pyruvate, phosphate dikinase (PPDK) by catalyzing its phosphorylation/dephosphorylation. The protein is Putative pyruvate, phosphate dikinase regulatory protein of Halalkalibacterium halodurans (strain ATCC BAA-125 / DSM 18197 / FERM 7344 / JCM 9153 / C-125) (Bacillus halodurans).